The chain runs to 156 residues: Anaerobic nitrite reductase HB2 (156 aa).

In terms of domain architecture, Globin spans G2 to H151. Residues E35–V39 carry the Homodimerization motif. Residues S45, K59, H63, and H98 each contribute to the heme b site. Residues D105–R117 carry the Homodimerization motif.

Belongs to the plant globin family. Homodimer. The cofactor is heme b.

The protein resides in the cytoplasm. It localises to the nucleus. The catalysed reaction is Fe(III)-heme b-[protein] + nitric oxide + H2O = Fe(II)-heme b-[protein] + nitrite + 2 H(+). In terms of biological role, phytoglobin that reduces nitrite to nitric oxide (NO) under anoxic conditions (e.g. during flooding or in waterlogged soil). May not function as an oxygen storage or transport protein. Has an unusually high affinity for O(2) through an hexacoordinate heme iron because of a very low dissociation constant. The chain is Anaerobic nitrite reductase HB2 from Solanum lycopersicum (Tomato).